Reading from the N-terminus, the 100-residue chain is Large ribosomal subunit protein bL27 (100 aa).

Residues 1–9 constitute a propeptide that is removed on maturation; that stretch reads MLSINLSLC.

This sequence belongs to the bacterial ribosomal protein bL27 family. Post-translationally, the N-terminus is cleaved by ribosomal processing cysteine protease Prp.

This is Large ribosomal subunit protein bL27 from Clostridium acetobutylicum (strain ATCC 824 / DSM 792 / JCM 1419 / IAM 19013 / LMG 5710 / NBRC 13948 / NRRL B-527 / VKM B-1787 / 2291 / W).